A 567-amino-acid chain; its full sequence is Oxygen-dependent choline dehydrogenase (567 aa).

4-33 provides a ligand contact to FAD; sequence DYIIIGAGSAGNVLAARLTEDADVTVLLLE. His473 (proton acceptor) is an active-site residue.

It belongs to the GMC oxidoreductase family. Requires FAD as cofactor.

The catalysed reaction is choline + A = betaine aldehyde + AH2. It catalyses the reaction betaine aldehyde + NAD(+) + H2O = glycine betaine + NADH + 2 H(+). It functions in the pathway amine and polyamine biosynthesis; betaine biosynthesis via choline pathway; betaine aldehyde from choline (cytochrome c reductase route): step 1/1. In terms of biological role, involved in the biosynthesis of the osmoprotectant glycine betaine. Catalyzes the oxidation of choline to betaine aldehyde and betaine aldehyde to glycine betaine at the same rate. This is Oxygen-dependent choline dehydrogenase from Yersinia pestis (strain Pestoides F).